The sequence spans 151 residues: Nascent polypeptide-associated complex subunit beta (151 aa).

2 disordered regions span residues 1–38 and 123–151; these read MDPS…AADD and KVSE…DEQD. The segment covering 20–29 has biased composition (basic residues); the sequence is TPRRKVKKPS. An NAC-A/B domain is found at 35–100; sequence AADDKKVQGA…AEEKTLSEIL (66 aa).

It belongs to the NAC-beta family. Part of the nascent polypeptide-associated complex (NAC), consisting of ucp15 and btf3. NAC associates with ribosomes via btf3.

The protein localises to the cytoplasm. It localises to the nucleus. Functionally, component of the nascent polypeptide-associated complex (NAC), a dynamic component of the ribosomal exit tunnel, protecting the emerging polypeptides from interaction with other cytoplasmic proteins to ensure appropriate nascent protein targeting. The NAC complex also promotes mitochondrial protein import by enhancing productive ribosome interactions with the outer mitochondrial membrane and blocks the inappropriate interaction of ribosomes translating non-secretory nascent polypeptides with translocation sites in the membrane of the endoplasmic reticulum. EGD1 may act as a transcription factor that exert a negative effect on the expression of several genes that are transcribed by RNA polymerase II. The chain is Nascent polypeptide-associated complex subunit beta (btf3) from Schizosaccharomyces pombe (strain 972 / ATCC 24843) (Fission yeast).